The sequence spans 328 residues: Tetraacyldisaccharide 4'-kinase (328 aa).

Residue 55–62 (TVGGNGKT) coordinates ATP.

This sequence belongs to the LpxK family.

The catalysed reaction is a lipid A disaccharide + ATP = a lipid IVA + ADP + H(+). The protein operates within glycolipid biosynthesis; lipid IV(A) biosynthesis; lipid IV(A) from (3R)-3-hydroxytetradecanoyl-[acyl-carrier-protein] and UDP-N-acetyl-alpha-D-glucosamine: step 6/6. In terms of biological role, transfers the gamma-phosphate of ATP to the 4'-position of a tetraacyldisaccharide 1-phosphate intermediate (termed DS-1-P) to form tetraacyldisaccharide 1,4'-bis-phosphate (lipid IVA). In Hamiltonella defensa subsp. Acyrthosiphon pisum (strain 5AT), this protein is Tetraacyldisaccharide 4'-kinase.